Here is a 130-residue protein sequence, read N- to C-terminus: Small ribosomal subunit protein uS8 (130 aa).

This sequence belongs to the universal ribosomal protein uS8 family. Part of the 30S ribosomal subunit. Contacts proteins S5 and S12.

Functionally, one of the primary rRNA binding proteins, it binds directly to 16S rRNA central domain where it helps coordinate assembly of the platform of the 30S subunit. This is Small ribosomal subunit protein uS8 from Pseudomonas fluorescens (strain Pf0-1).